The chain runs to 411 residues: Aspartate kinase (411 aa).

Positions 265 to 348 (LTIRGVPDTP…KIAKVSIVGV (84 aa)) constitute an ACT domain.

Belongs to the aspartokinase family.

It localises to the cytoplasm. The catalysed reaction is L-aspartate + ATP = 4-phospho-L-aspartate + ADP. It participates in amino-acid biosynthesis; L-lysine biosynthesis via DAP pathway; (S)-tetrahydrodipicolinate from L-aspartate: step 1/4. The protein operates within amino-acid biosynthesis; L-methionine biosynthesis via de novo pathway; L-homoserine from L-aspartate: step 1/3. It functions in the pathway amino-acid biosynthesis; L-threonine biosynthesis; L-threonine from L-aspartate: step 1/5. With respect to regulation, allosterically feedback inhibited by L-lysine and L-threonine individually and also subject to a concerted feedback inhibition by these amino acids. In terms of biological role, involved in the biosynthesis of L-aspartate-beta-semialdehyde which is a central intermediate in the biosynthesis of different amino acids (L-lysine, L-methionine, L-threonine). Catalyzes the phosphorylation of the beta-carboxyl group of L-aspartate to yield 4-phospho-L-aspartate. The protein is Aspartate kinase of Pseudomonas putida (strain ATCC 47054 / DSM 6125 / CFBP 8728 / NCIMB 11950 / KT2440).